Reading from the N-terminus, the 944-residue chain is Protein unc-45 homolog A (944 aa).

The tract at residues Met-1–Arg-25 is disordered. TPR repeat units follow at residues Ala-21–Pro-54, Ala-58–Asp-91, and Val-92–Asn-125. Position 70 is an N6-acetyllysine (Lys-70). Lys-483 carries the post-translational modification N6-acetyllysine.

Interacts with PGR isoforms A and B as well as with NR3C1 in the absence of ligand, and with HSP90AB1. Binding to HSP90AB1 involves 2 UNC45A monomers per HSP90AB1 dimer. In terms of tissue distribution, detected in spleen, bone marrow, lung and ovary, and at lower levels in testis, kidney, heart and brain (at protein level). Ubiquitous. Detected in uterus, large intestine, kidney, spleen, lung, brain, liver and ovary.

The protein localises to the cytoplasm. It localises to the perinuclear region. Its subcellular location is the nucleus. Its function is as follows. May act as co-chaperone for HSP90 (Potential). Prevents the stimulation of HSP90AB1 ATPase activity by AHSA1. Positive factor in promoting PGR function in the cell. May be necessary for proper folding of myosin (Potential). Necessary for normal cell proliferation. Necessary for normal myotube formation and myosin accumulation during muscle cell development. May play a role in erythropoiesis in stroma cells in the spleen. In Mus musculus (Mouse), this protein is Protein unc-45 homolog A (Unc45a).